Here is a 484-residue protein sequence, read N- to C-terminus: Pyruvate kinase (484 aa).

Arginine 33 provides a ligand contact to substrate. Residues asparagine 35, serine 37, aspartate 67, and threonine 68 each contribute to the K(+) site. 35-38 (NFSH) contacts ATP. Residues arginine 74 and lysine 155 each contribute to the ATP site. Glutamate 221 serves as a coordination point for Mg(2+). Residues glycine 244, aspartate 245, and threonine 277 each coordinate substrate. Aspartate 245 lines the Mg(2+) pocket.

The protein belongs to the pyruvate kinase family. As to quaternary structure, homotetramer. It depends on Mg(2+) as a cofactor. Requires K(+) as cofactor.

It catalyses the reaction pyruvate + ATP = phosphoenolpyruvate + ADP + H(+). It participates in carbohydrate degradation; glycolysis; pyruvate from D-glyceraldehyde 3-phosphate: step 5/5. The sequence is that of Pyruvate kinase (pyk) from Chlamydia pneumoniae (Chlamydophila pneumoniae).